Reading from the N-terminus, the 158-residue chain is Protein Smg homolog (158 aa).

This sequence belongs to the Smg family.

In Shewanella sp. (strain ANA-3), this protein is Protein Smg homolog.